We begin with the raw amino-acid sequence, 931 residues long: Neuropilin-2 (931 aa).

Residues 1–20 (MDMFPLTWVFLALYFSRHQV) constitute a signal peptide (or 22). The Extracellular portion of the chain corresponds to 21–864 (RGQPDPPCGG…EKSWLYTLDP (844 aa)). Disulfide bonds link C28–C55, C83–C105, and C149–C175. CUB domains lie at 28–142 (CGGR…YEIF) and 149–267 (CSKN…YYLV). N-linked (GlcNAc...) asparagine glycosylation is found at N152 and N157. Positions 197, 211, and 252 each coordinate Ca(2+). C208 and C230 are oxidised to a cystine. 2 disulfide bridges follow: C277–C427 and C434–C592. F5/8 type C domains are found at residues 277–427 (CNVP…LFGC) and 434–592 (CSNM…VLGC). Residues 298 to 310 (TYSDGRWTPQQSR) are compositionally biased toward polar residues. The segment at 298–317 (TYSDGRWTPQQSRLHGDDNG) is disordered. The disordered stretch occupies residues 601 to 622 (VETLGPTVKSEETTTPYPTEEE). N-linked (GlcNAc...) asparagine glycosylation is present at N629. One can recognise an MAM domain in the interval 642–802 (SGFNCNFDFL…TDVPLENCME (161 aa)). N-linked (GlcNAc...) asparagine glycosylation occurs at N839. The chain crosses the membrane as a helical span at residues 865–889 (ILITIIAMSSLGVLLGATCAGLLLY). Residues 890–931 (CTCSYSGLSSRSCTTLENYNFELYDGLKHKVKMNHQKCCSEA) lie on the Cytoplasmic side of the membrane.

This sequence belongs to the neuropilin family. As to quaternary structure, heterodimer with NRP1. Binds PLXNB1. In terms of assembly, (Microbial infection) Interacts with human cytomegalovirus proteins gL, UL128, UL130 and UL131A.

It localises to the membrane. It is found in the secreted. Functionally, high affinity receptor for semaphorins 3C, 3F, VEGF-165 and VEGF-145 isoforms of VEGF, and the PLGF-2 isoform of PGF. (Microbial infection) Acts as a receptor for human cytomegalovirus pentamer-dependent entry in epithelial and endothelial cells. The sequence is that of Neuropilin-2 (NRP2) from Homo sapiens (Human).